The sequence spans 264 residues: B3-hordein (264 aa).

Positions 1-15 (QQPVSRQPQQIIPQQ) are enriched in low complexity. A disordered region spans residues 1–66 (QQPVSRQPQQ…QQPFPQQPPF (66 aa)). 2 stretches are compositionally biased toward pro residues: residues 16–44 (PQQP…PYPQ) and 52–64 (QPFP…PQQP).

The protein belongs to the gliadin/glutenin family. Developing endosperm.

Functionally, sulfur-rich seed storage protein. The polypeptide is B3-hordein (Hordeum vulgare (Barley)).